A 523-amino-acid chain; its full sequence is Cytoplasmic dynein 1 light intermediate chain 1 (523 aa).

The tract at residues 1 to 45 is disordered; sequence MAAVGRVGSFGSSPPGLASTYASGPLANELASGSGGPAAGDDEDG. 74-81 serves as a coordination point for ATP; sequence GEDGAGKT. At Ser207 the chain carries Phosphoserine. Thr213 bears the Phosphothreonine mark. Disordered stretches follow at residues 387-434 and 457-523; these read PPTA…DPNM and GSPG…GEAS. Ser398 and Ser405 each carry phosphoserine. Position 408 is a phosphothreonine (Thr408). Phosphoserine is present on residues Ser412, Ser419, Ser421, and Ser427. Over residues 412-421 the composition is skewed to low complexity; sequence SVSSNVASVS. Gly residues predominate over residues 458–473; the sequence is SPGGPGVGGSPGGGAA. Over residues 474–483 the composition is skewed to low complexity; the sequence is GASTSLPPSA. Ser486 and Ser510 each carry phosphoserine. Phosphothreonine occurs at positions 512 and 513. A Phosphoserine modification is found at Ser516.

The protein belongs to the dynein light intermediate chain family. In terms of assembly, homodimer. The cytoplasmic dynein 1 complex consists of two catalytic heavy chains (HCs) and a number of non-catalytic subunits presented by intermediate chains (ICs), light intermediate chains (LICs) and light chains (LCs); the composition seems to vary in respect to the IC, LIC and LC composition. The heavy chain homodimer serves as a scaffold for the probable homodimeric assembly of the respective non-catalytic subunits. The ICs and LICs bind directly to the HC dimer and the LCs assemble on the IC dimer. Self-associates. Interacts with DYNC1H1; DYNC1LI1 and DYNC1LI2 bind mutually exclusive to DYNC1H1. Interacts with PCNT. Forms a complex with RAB11FIP3 and RAB11A1; the interaction between DYNC1LI1 and RAB11FIP3 is direct and induces DYNC1LI1 localization onto endosomal membrane; the complex regulates endocytic trafficking. Interacts with RUFY3. In terms of processing, phosphorylated during mitosis but not in interphase.

The protein localises to the cytoplasm. Its subcellular location is the chromosome. It is found in the centromere. The protein resides in the kinetochore. It localises to the cytoskeleton. The protein localises to the spindle pole. Its subcellular location is the recycling endosome membrane. Functionally, acts as one of several non-catalytic accessory components of the cytoplasmic dynein 1 complex that are thought to be involved in linking dynein to cargos and to adapter proteins that regulate dynein function. Cytoplasmic dynein 1 acts as a motor for the intracellular retrograde motility of vesicles and organelles along microtubules. May play a role in binding dynein to membranous organelles or chromosomes. Probably involved in the microtubule-dependent transport of pericentrin. Is required for progress through the spindle assembly checkpoint. The phosphorylated form appears to be involved in the selective removal of MAD1L1 and MAD1L2 but not BUB1B from kinetochores. Forms a functional Rab11/RAB11FIP3/dynein complex onto endosomal membrane that regulates the movement of peripheral sorting endosomes (SE) along microtubule tracks toward the microtubule organizing center/centrosome, generating the endosomal recycling compartment (ERC). The protein is Cytoplasmic dynein 1 light intermediate chain 1 (Dync1li1) of Rattus norvegicus (Rat).